The chain runs to 299 residues: 4-diphosphocytidyl-2-C-methyl-D-erythritol kinase (299 aa).

Lysine 18 is a catalytic residue. 104-114 (PIASGIGGGSS) provides a ligand contact to ATP. Aspartate 146 is a catalytic residue.

The protein belongs to the GHMP kinase family. IspE subfamily.

It carries out the reaction 4-CDP-2-C-methyl-D-erythritol + ATP = 4-CDP-2-C-methyl-D-erythritol 2-phosphate + ADP + H(+). The protein operates within isoprenoid biosynthesis; isopentenyl diphosphate biosynthesis via DXP pathway; isopentenyl diphosphate from 1-deoxy-D-xylulose 5-phosphate: step 3/6. In terms of biological role, catalyzes the phosphorylation of the position 2 hydroxy group of 4-diphosphocytidyl-2C-methyl-D-erythritol. This Brucella abortus biovar 1 (strain 9-941) protein is 4-diphosphocytidyl-2-C-methyl-D-erythritol kinase.